Consider the following 408-residue polypeptide: Imidazolonepropionase (408 aa).

The Fe(3+) site is built by histidine 73 and histidine 75. Residues histidine 73 and histidine 75 each contribute to the Zn(2+) site. Arginine 82, tyrosine 145, and histidine 178 together coordinate 4-imidazolone-5-propanoate. Tyrosine 145 provides a ligand contact to N-formimidoyl-L-glutamate. Histidine 243 provides a ligand contact to Fe(3+). Residue histidine 243 participates in Zn(2+) binding. Glutamine 246 serves as a coordination point for 4-imidazolone-5-propanoate. Aspartate 318 is a binding site for Fe(3+). Aspartate 318 contributes to the Zn(2+) binding site. Asparagine 320 and glycine 322 together coordinate N-formimidoyl-L-glutamate. Residue serine 323 coordinates 4-imidazolone-5-propanoate.

Belongs to the metallo-dependent hydrolases superfamily. HutI family. Zn(2+) serves as cofactor. The cofactor is Fe(3+).

The protein localises to the cytoplasm. The catalysed reaction is 4-imidazolone-5-propanoate + H2O = N-formimidoyl-L-glutamate. It functions in the pathway amino-acid degradation; L-histidine degradation into L-glutamate; N-formimidoyl-L-glutamate from L-histidine: step 3/3. Functionally, catalyzes the hydrolytic cleavage of the carbon-nitrogen bond in imidazolone-5-propanoate to yield N-formimidoyl-L-glutamate. It is the third step in the universal histidine degradation pathway. This is Imidazolonepropionase from Shewanella baltica (strain OS155 / ATCC BAA-1091).